Consider the following 316-residue polypeptide: Bifunctional protein FolD (316 aa).

NADP(+)-binding positions include 165-167 and I231; that span reads GKS.

The protein belongs to the tetrahydrofolate dehydrogenase/cyclohydrolase family. Homodimer.

The catalysed reaction is (6R)-5,10-methylene-5,6,7,8-tetrahydrofolate + NADP(+) = (6R)-5,10-methenyltetrahydrofolate + NADPH. It catalyses the reaction (6R)-5,10-methenyltetrahydrofolate + H2O = (6R)-10-formyltetrahydrofolate + H(+). It participates in one-carbon metabolism; tetrahydrofolate interconversion. In terms of biological role, catalyzes the oxidation of 5,10-methylenetetrahydrofolate to 5,10-methenyltetrahydrofolate and then the hydrolysis of 5,10-methenyltetrahydrofolate to 10-formyltetrahydrofolate. In Sphingobium chlorophenolicum, this protein is Bifunctional protein FolD.